Consider the following 897-residue polypeptide: Mating-type protein ALPHA3 (897 aa).

Mating type proteins are sequence specific DNA-binding proteins that act as master switches in yeast differentiation by controlling gene expression in a cell type-specific fashion. Required for efficient mating as an alpha-cell. This Kluyveromyces lactis (strain ATCC 8585 / CBS 2359 / DSM 70799 / NBRC 1267 / NRRL Y-1140 / WM37) (Yeast) protein is Mating-type protein ALPHA3 (HMLALPHA3).